Reading from the N-terminus, the 495-residue chain is Neuronal acetylcholine receptor subunit beta-4 (495 aa).

The signal sequence occupies residues 1 to 20; that stretch reads MRGTPLLLVSLFALLQPGDC. Residues 21 to 235 lie on the Extracellular side of the membrane; that stretch reads RLANAEEKLM…IIKRKPLFYT (215 aa). 4 N-linked (GlcNAc...) asparagine glycosylation sites follow: asparagine 35, asparagine 92, asparagine 137, and asparagine 165. Cysteines 152 and 166 form a disulfide. The helical transmembrane segment at 236-256 threads the bilayer; sequence INLIIPCVLITSLAILVFYLP. The Cytoplasmic segment spans residues 257–264; the sequence is SDCGEKMT. Residue glutamate 261 participates in Na(+) binding. A helical transmembrane segment spans residues 265–285; the sequence is LCISVLLALTFFLLLISKIVP. Topologically, residues 286-297 are extracellular; sequence PTSLDIPLIGKY. The chain crosses the membrane as a helical span at residues 298 to 318; sequence LLFTMVLVTFSIVTTVCVLNV. Residues 319–463 are Cytoplasmic-facing; that stretch reads HHRSPSTHTM…WKFVAMVVDR (145 aa). A helical membrane pass occupies residues 464-484; it reads LFLWVFVIVCILGTMGLFLPP. The Extracellular portion of the chain corresponds to 485-495; it reads LFQIHAPSKGL.

The protein belongs to the ligand-gated ion channel (TC 1.A.9) family. Acetylcholine receptor (TC 1.A.9.1) subfamily. Beta-4/CHRNB4 sub-subfamily. As to quaternary structure, neuronal AChR is composed of two different types of subunits: alpha and beta. CHRNB4/Beta-4 subunit can be combined to CHRNA2/alpha-2, CHRNA3/alpha-3 or CHRNA4/alpha-4, CHRNA5/alpha-5 and CHRNB3/beta-3 to give rise to functional receptors. Forms stoichiometries such as (CHRNA3)2:(CHRNB4)3 or (CHRNA3:CHRNB4)2:CHRNB3. Interacts with RIC3; which is required for proper folding and assembly. Interacts with LYPD6. Predominantly expressed by immature T-cells in the thymus.

It is found in the synaptic cell membrane. The protein localises to the cell membrane. It carries out the reaction K(+)(in) = K(+)(out). The enzyme catalyses Na(+)(in) = Na(+)(out). The catalysed reaction is Ca(2+)(in) = Ca(2+)(out). Its activity is regulated as follows. Activated by a myriad of ligands such as acetylcholine, cytisine, nicotine, choline and epibatidine. The heteropentamer CHRNA3:CHRNB4 activity is blocked by the alpha-conotoxin ImI and AuIB. In terms of biological role, component of neuronal acetylcholine receptors (nAChRs) that function as pentameric, ligand-gated cation channels with high calcium permeability among other activities. nAChRs are excitatory neurotrasnmitter receptors formed by a collection of nAChR subunits known to mediate synaptic transmission in the nervous system and the neuromuscular junction. Each nAchR subunit confers differential attributes to channel properties, including activation, deactivation and desensitization kinetics, pH sensitivity, cation permeability, and binding to allosteric modulators. CHRNB4 forms heteropentameric neuronal acetylcholine receptors with CHRNA2, CHRNA3 and CHRNA4, as well as CHRNA5 and CHRNB3 as accesory subunits. CHRNA3:CHRNB4 being predominant in neurons of the autonomic ganglia, it is known as ganglionic nicotinic receptor. CHRNA3:CHRNB4 or CHRNA3:CHRNA5:CHRNB4 play also an important role in the habenulo-interpeduncular tract, modulating the mesolimbic dopamine system and affecting reward circuits and addiction. Hypothalamic CHRNA3:CHRNB4 nAChR activation by nicotine leads to activation of POMC neurons and a decrease in food intake. The sequence is that of Neuronal acetylcholine receptor subunit beta-4 (Chrnb4) from Mus musculus (Mouse).